The primary structure comprises 221 residues: GTP cyclohydrolase III (221 aa).

The protein belongs to the archaeal-type GTP cyclohydrolase family.

The enzyme catalyses GTP + 3 H2O = 2-amino-5-formylamino-6-(5-phospho-D-ribosylamino)pyrimidin-4(3H)-one + 2 phosphate + 2 H(+). Catalyzes the formation of 2-amino-5-formylamino-6-ribofuranosylamino-4(3H)-pyrimidinone ribonucleotide monophosphate and inorganic phosphate from GTP. Also has an independent pyrophosphate phosphohydrolase activity. This Pyrobaculum arsenaticum (strain DSM 13514 / JCM 11321 / PZ6) protein is GTP cyclohydrolase III.